The chain runs to 447 residues: MARTYFGTDGIRGLVGRSPITPDFALRLAHAVGRVLRRKEARPMVLIGKDTRISGYMLESALESGFNSAGVDVMLLGPLPTPGVAYLTRAQRASLGVVISASHNPYYDNGIKFFSAQGTKLPDAWEEEVEQALTEDPVWADSAALGKARRLEDAAGRYIEFCKSTFDHALTLKGVKIVVDAAHGAAYQIAPKVFHELGADVVAIGCAPDGLNINEDVGATHPEALVLAVRANKADFGVALDGDADRLLLVDAAGRLYNGDELLYLLAADRLARGEAVPGAVGTLMTNMAVEVALKSQGVGFVRAKVGDRYVLEELHRQGWTLGGEGSGHLLALDKHTTGDGLVSALQVLQACVRSGKSLSQWLSSVQLFPQVLLNVRLQPGQDWKRNTQLEEATEAVKAELGDTGRVLIRASGTEPLLRVMVEARDGDQASRCAERLASVAKNSPAA.

The active-site Phosphoserine intermediate is Ser-102. Residues Ser-102, Asp-241, Asp-243, and Asp-245 each contribute to the Mg(2+) site. At Ser-102 the chain carries Phosphoserine.

The protein belongs to the phosphohexose mutase family. It depends on Mg(2+) as a cofactor. Post-translationally, activated by phosphorylation.

It carries out the reaction alpha-D-glucosamine 1-phosphate = D-glucosamine 6-phosphate. In terms of biological role, catalyzes the conversion of glucosamine-6-phosphate to glucosamine-1-phosphate. The polypeptide is Phosphoglucosamine mutase (Delftia acidovorans (strain DSM 14801 / SPH-1)).